A 453-amino-acid chain; its full sequence is Bifunctional protein GlmU (453 aa).

The tract at residues 1 to 225 is pyrophosphorylase; sequence MNIVILAAGT…EWETLGVNSK (225 aa). Residues 6-9, K20, Q71, 76-77, 98-100, G135, E150, N165, and N223 contribute to the UDP-N-acetyl-alpha-D-glucosamine site; these read LAAG, GT, and YGD. Residue D100 participates in Mg(2+) binding. A Mg(2+)-binding site is contributed by N223. The tract at residues 226–246 is linker; it reads AQLAELERIHQRNIAEALLVD. An N-acetyltransferase region spans residues 247-453; the sequence is GVTLADPARL…GYVRPVKKKS (207 aa). UDP-N-acetyl-alpha-D-glucosamine-binding residues include R329 and K347. H359 acts as the Proton acceptor in catalysis. Residues Y362 and N373 each coordinate UDP-N-acetyl-alpha-D-glucosamine. Residues A376, 382–383, S401, and A419 each bind acetyl-CoA; that span reads NY.

This sequence in the N-terminal section; belongs to the N-acetylglucosamine-1-phosphate uridyltransferase family. It in the C-terminal section; belongs to the transferase hexapeptide repeat family. Homotrimer. The cofactor is Mg(2+).

The protein localises to the cytoplasm. The enzyme catalyses alpha-D-glucosamine 1-phosphate + acetyl-CoA = N-acetyl-alpha-D-glucosamine 1-phosphate + CoA + H(+). It catalyses the reaction N-acetyl-alpha-D-glucosamine 1-phosphate + UTP + H(+) = UDP-N-acetyl-alpha-D-glucosamine + diphosphate. It functions in the pathway nucleotide-sugar biosynthesis; UDP-N-acetyl-alpha-D-glucosamine biosynthesis; N-acetyl-alpha-D-glucosamine 1-phosphate from alpha-D-glucosamine 6-phosphate (route II): step 2/2. The protein operates within nucleotide-sugar biosynthesis; UDP-N-acetyl-alpha-D-glucosamine biosynthesis; UDP-N-acetyl-alpha-D-glucosamine from N-acetyl-alpha-D-glucosamine 1-phosphate: step 1/1. Its pathway is bacterial outer membrane biogenesis; LPS lipid A biosynthesis. In terms of biological role, catalyzes the last two sequential reactions in the de novo biosynthetic pathway for UDP-N-acetylglucosamine (UDP-GlcNAc). The C-terminal domain catalyzes the transfer of acetyl group from acetyl coenzyme A to glucosamine-1-phosphate (GlcN-1-P) to produce N-acetylglucosamine-1-phosphate (GlcNAc-1-P), which is converted into UDP-GlcNAc by the transfer of uridine 5-monophosphate (from uridine 5-triphosphate), a reaction catalyzed by the N-terminal domain. The protein is Bifunctional protein GlmU of Burkholderia lata (strain ATCC 17760 / DSM 23089 / LMG 22485 / NCIMB 9086 / R18194 / 383).